Here is a 499-residue protein sequence, read N- to C-terminus: Lipopolysaccharide core galacturonosyltransferase RgtA (499 aa).

Transmembrane regions (helical) follow at residues 11–31, 74–94, 103–123, 125–145, 165–185, 199–219, 248–268, 291–311, 316–336, and 351–371; these read TAGL…IVLP, IGAL…FYGL, EALA…SYMA, QDLT…YGFF, IGLI…IAIL, MLAA…WLQG, LLAF…IFAA, MMLA…STTV, LDPF…AAGL, and VLMA…GLIG.

Belongs to the glycosyltransferase 83 family.

The protein localises to the cell inner membrane. It functions in the pathway bacterial outer membrane biogenesis; LPS core biosynthesis. Its function is as follows. Involved in the modification of the lipopolysaccharide (LPS) inner core. Catalyzes the transfer of a galacturonic acid (GalA) residue to the 4-position of the outer Kdo (3-deoxy-D-manno-octulosonic acid) residue of the LPS inner core, using dodecaprenyl phosphate-GalA as the donor substrate. GalA addition by RgtA is required for RgtB activity. This chain is Lipopolysaccharide core galacturonosyltransferase RgtA, found in Rhizobium johnstonii (strain DSM 114642 / LMG 32736 / 3841) (Rhizobium leguminosarum bv. viciae).